Here is a 270-residue protein sequence, read N- to C-terminus: Putative phosphoenolpyruvate synthase regulatory protein (270 aa).

Residue 150-157 (GVSRCGKT) coordinates ADP.

It belongs to the pyruvate, phosphate/water dikinase regulatory protein family. PSRP subfamily.

It catalyses the reaction [pyruvate, water dikinase] + ADP = [pyruvate, water dikinase]-phosphate + AMP + H(+). It carries out the reaction [pyruvate, water dikinase]-phosphate + phosphate + H(+) = [pyruvate, water dikinase] + diphosphate. Its function is as follows. Bifunctional serine/threonine kinase and phosphorylase involved in the regulation of the phosphoenolpyruvate synthase (PEPS) by catalyzing its phosphorylation/dephosphorylation. The chain is Putative phosphoenolpyruvate synthase regulatory protein from Aeromonas hydrophila subsp. hydrophila (strain ATCC 7966 / DSM 30187 / BCRC 13018 / CCUG 14551 / JCM 1027 / KCTC 2358 / NCIMB 9240 / NCTC 8049).